A 163-amino-acid chain; its full sequence is Small heat shock protein C1 (163 aa).

The 109-residue stretch at 55–163 (TFYESSSLKS…EQDSREITIN (109 aa)) folds into the sHSP domain.

It belongs to the small heat shock protein (HSP20) family.

This is Small heat shock protein C1 (hspC1) from Rickettsia prowazekii (strain Madrid E).